The primary structure comprises 424 residues: Adenylosuccinate synthetase (424 aa).

Residues 12-18 (GDEGKGK) and 40-42 (GHT) each bind GTP. Residue aspartate 13 is the Proton acceptor of the active site. Mg(2+) contacts are provided by aspartate 13 and glycine 40. Residues 13–16 (DEGK), 38–41 (NAGH), threonine 130, arginine 144, asparagine 220, threonine 235, and arginine 299 contribute to the IMP site. The Proton donor role is filled by histidine 41. 295-301 (VTTGRKR) is a binding site for substrate. GTP-binding positions include arginine 301, 327–329 (KLD), and 412–414 (GTG).

The protein belongs to the adenylosuccinate synthetase family. In terms of assembly, homodimer. It depends on Mg(2+) as a cofactor.

It is found in the cytoplasm. It catalyses the reaction IMP + L-aspartate + GTP = N(6)-(1,2-dicarboxyethyl)-AMP + GDP + phosphate + 2 H(+). It participates in purine metabolism; AMP biosynthesis via de novo pathway; AMP from IMP: step 1/2. Its function is as follows. Plays an important role in the de novo pathway and in the salvage pathway of purine nucleotide biosynthesis. Catalyzes the first committed step in the biosynthesis of AMP from IMP. The sequence is that of Adenylosuccinate synthetase (adB) from Emericella nidulans (strain FGSC A4 / ATCC 38163 / CBS 112.46 / NRRL 194 / M139) (Aspergillus nidulans).